Consider the following 466-residue polypeptide: Argininosuccinate lyase 1 (466 aa).

Belongs to the lyase 1 family. Argininosuccinate lyase subfamily.

The protein localises to the cytoplasm. The catalysed reaction is 2-(N(omega)-L-arginino)succinate = fumarate + L-arginine. Its pathway is amino-acid biosynthesis; L-arginine biosynthesis; L-arginine from L-ornithine and carbamoyl phosphate: step 3/3. The chain is Argininosuccinate lyase 1 from Agrobacterium fabrum (strain C58 / ATCC 33970) (Agrobacterium tumefaciens (strain C58)).